The chain runs to 147 residues: Interleukin-4 (147 aa).

An N-terminal signal peptide occupies residues M1–G24. A disulfide bridge connects residues C48 and C88. N62 carries an N-linked (GlcNAc...) asparagine glycan.

This sequence belongs to the IL-4/IL-13 family.

The protein localises to the secreted. Participates in at least several B-cell activation processes as well as of other cell types. It is a costimulator of DNA-synthesis. It induces the expression of class II MHC molecules on resting B-cells. It enhances both secretion and cell surface expression of IgE and IgG1. It also regulates the expression of the low affinity Fc receptor for IgE (CD23) on both lymphocytes and monocytes. Positively regulates IL31RA expression in macrophages. Stimulates autophagy in dendritic cells by interfering with mTORC1 signaling and through the induction of RUFY4. This chain is Interleukin-4 (IL4), found in Oryctolagus cuniculus (Rabbit).